The chain runs to 86 residues: MSALDKTMYFDFGQNEKKDVHQTLETVYNSLEEKGYNPINQIVGYLLSGDPAYIPRLNDARNLIRKHERDEIIEELVRAYLDKGEK.

It belongs to the UPF0297 family.

This chain is UPF0297 protein LSL_1110, found in Ligilactobacillus salivarius (strain UCC118) (Lactobacillus salivarius).